Consider the following 224-residue polypeptide: Deoxyribose-phosphate aldolase (224 aa).

D92 (proton donor/acceptor) is an active-site residue. K154 functions as the Schiff-base intermediate with acetaldehyde in the catalytic mechanism. The active-site Proton donor/acceptor is the K183.

This sequence belongs to the DeoC/FbaB aldolase family. DeoC type 1 subfamily.

Its subcellular location is the cytoplasm. The enzyme catalyses 2-deoxy-D-ribose 5-phosphate = D-glyceraldehyde 3-phosphate + acetaldehyde. Its pathway is carbohydrate degradation; 2-deoxy-D-ribose 1-phosphate degradation; D-glyceraldehyde 3-phosphate and acetaldehyde from 2-deoxy-alpha-D-ribose 1-phosphate: step 2/2. Its function is as follows. Catalyzes a reversible aldol reaction between acetaldehyde and D-glyceraldehyde 3-phosphate to generate 2-deoxy-D-ribose 5-phosphate. This chain is Deoxyribose-phosphate aldolase, found in Histophilus somni (strain 129Pt) (Haemophilus somnus).